The chain runs to 195 residues: Imidazoleglycerol-phosphate dehydratase (195 aa).

This sequence belongs to the imidazoleglycerol-phosphate dehydratase family.

The protein localises to the cytoplasm. The enzyme catalyses D-erythro-1-(imidazol-4-yl)glycerol 3-phosphate = 3-(imidazol-4-yl)-2-oxopropyl phosphate + H2O. Its pathway is amino-acid biosynthesis; L-histidine biosynthesis; L-histidine from 5-phospho-alpha-D-ribose 1-diphosphate: step 6/9. The sequence is that of Imidazoleglycerol-phosphate dehydratase from Leuconostoc mesenteroides subsp. mesenteroides (strain ATCC 8293 / DSM 20343 / BCRC 11652 / CCM 1803 / JCM 6124 / NCDO 523 / NBRC 100496 / NCIMB 8023 / NCTC 12954 / NRRL B-1118 / 37Y).